The following is a 287-amino-acid chain: Shikimate dehydrogenase (NADP(+)) (287 aa).

Residues 18–20 (SYS) and Thr66 contribute to the shikimate site. Lys70 acts as the Proton acceptor in catalysis. Glu82 is an NADP(+) binding site. Positions 91 and 106 each coordinate shikimate. Residues 130–134 (GSGGA) and Met228 each bind NADP(+). Tyr230 provides a ligand contact to shikimate. Position 251 (Gly251) interacts with NADP(+).

The protein belongs to the shikimate dehydrogenase family. As to quaternary structure, homodimer.

It carries out the reaction shikimate + NADP(+) = 3-dehydroshikimate + NADPH + H(+). The protein operates within metabolic intermediate biosynthesis; chorismate biosynthesis; chorismate from D-erythrose 4-phosphate and phosphoenolpyruvate: step 4/7. Involved in the biosynthesis of the chorismate, which leads to the biosynthesis of aromatic amino acids. Catalyzes the reversible NADPH linked reduction of 3-dehydroshikimate (DHSA) to yield shikimate (SA). The sequence is that of Shikimate dehydrogenase (NADP(+)) from Chlorobium chlorochromatii (strain CaD3).